Consider the following 881-residue polypeptide: Serine/threonine-protein phosphatase 6 regulatory subunit 1 (881 aa).

The tract at residues 10 to 403 (SSHLDTLLER…VFNNFLHAQV (394 aa)) is interaction with PPP6C. Ser-232 is subject to Phosphoserine. Thr-524 carries the phosphothreonine modification. A phosphoserine mark is found at Ser-529, Ser-530, Ser-531, Ser-635, and Ser-638. 2 stretches are compositionally biased toward acidic residues: residues 621 to 642 (DDDEEEEDEEEAQGSGESDGED) and 669 to 686 (DSEDEEEEDEEEEEDEEG). A disordered region spans residues 621-881 (DDDEEEEDEE…PEGPASPGSQ (261 aa)). Pro residues predominate over residues 700 to 710 (YPSPGPQPPGP). A phosphoserine mark is found at Ser-702, Ser-726, and Ser-759. Residues 814 to 830 (APSSSDSATRDPSTSVP) show a composition bias toward polar residues. At Ser-846 the chain carries Phosphoserine.

This sequence belongs to the SAPS family. As to quaternary structure, protein phosphatase 6 (PP6) holoenzyme is proposed to be a heterotrimeric complex formed of the catalytic subunit, a SAPS domain-containing subunit (PP6R) and an ankyrin repeat-domain containing regulatory subunit (ARS). Interacts with PPP6C and NFKBIE. Interacts with ANKRD28, ANKRD44 and ANKRD52. Ubiquitous with higher expression in testis.

The protein localises to the cytoplasm. Regulatory subunit of protein phosphatase 6 (PP6). May function as a scaffolding PP6 subunit. Involved in the PP6-mediated dephosphorylation of NFKBIE opposing its degradation in response to TNF-alpha. This Homo sapiens (Human) protein is Serine/threonine-protein phosphatase 6 regulatory subunit 1 (PPP6R1).